A 370-amino-acid chain; its full sequence is Vasopressin V2 receptor (370 aa).

The span at 1 to 10 (MLLASTTSAV) shows a compositional bias: polar residues. A disordered region spans residues 1 to 26 (MLLASTTSAVPRTLSPPTPAGNGSRE). Residues 1-37 (MLLASTTSAVPRTLSPPTPAGNGSRELLDTRDPLLVQ) lie on the Extracellular side of the membrane. The N-linked (GlcNAc...) asparagine glycan is linked to Asn22. The helical transmembrane segment at 38–62 (AELALLSTVFVAVALSNGLVLGALA) threads the bilayer. At 63–76 (RRVRRGRWAPMHVF) the chain is on the cytoplasmic side. A helical membrane pass occupies residues 77–97 (IGHLCLADLAVALFQVLPQLA). At 98-112 (WDATDRFRGPDALCR) the chain is on the extracellular side. Residues 113 to 134 (AVKYLQMVGMYASSYMILAMTL) traverse the membrane as a helical segment. At 135 to 158 (DRHRAICRPMLAYRHGGGARWNRP) the chain is on the cytoplasmic side. The helical transmembrane segment at 159 to 179 (VLVAWAFSLILSLPQLFIFAQ) threads the bilayer. The Extracellular segment spans residues 180–199 (RDVGNGSGVLDCWAHFAEPW). The helical transmembrane segment at 200-219 (GLRAYVTWIALMVFVAPALG) threads the bilayer. The Cytoplasmic portion of the chain corresponds to 220-270 (IAACQVLIFREIHSSLVPGPAERAGGCRGGHRTGSPSEGARVSAAMAKTVR). Residues 271 to 292 (MTLVIVIVYVLCWAPFFLVQLW) traverse the membrane as a helical segment. At 293 to 307 (AAWDPQAPLEGAPFV) the chain is on the extracellular side. Residues 308-327 (LLMLLASLNSCTNPWIYAFF) traverse the membrane as a helical segment. At 328–370 (SSSVSSELRSLFCWARSRAPPSLGPQEESCATASSFLAKDTSS) the chain is on the cytoplasmic side. Cys340 is lipidated: S-palmitoyl cysteine.

This sequence belongs to the G-protein coupled receptor 1 family. Vasopressin/oxytocin receptor subfamily. As to quaternary structure, interacts with ARRDC4. Identified in a complex containing at least ARRDC4, V2R and HGS. Interacts with TMEM147.

The protein resides in the cell membrane. Functionally, receptor for arginine vasopressin. The activity of this receptor is mediated by G proteins which activate adenylate cyclase. Involved in renal water reabsorption. This chain is Vasopressin V2 receptor (AVPR2), found in Canis lupus familiaris (Dog).